Reading from the N-terminus, the 284-residue chain is D-tagatose-1,6-bisphosphate aldolase subunit GatY (284 aa).

Residue Asp82 is the Proton donor of the active site. Residues His83 and His180 each contribute to the Zn(2+) site. Gly181 is a dihydroxyacetone phosphate binding site. Position 208 (His208) interacts with Zn(2+). Dihydroxyacetone phosphate contacts are provided by residues 209–211 (GAS) and 230–233 (NVAT).

This sequence belongs to the class II fructose-bisphosphate aldolase family. TagBP aldolase GatY subfamily. As to quaternary structure, forms a complex with GatZ. Zn(2+) serves as cofactor.

It carries out the reaction D-tagatofuranose 1,6-bisphosphate = D-glyceraldehyde 3-phosphate + dihydroxyacetone phosphate. It functions in the pathway carbohydrate metabolism; D-tagatose 6-phosphate degradation; D-glyceraldehyde 3-phosphate and glycerone phosphate from D-tagatose 6-phosphate: step 2/2. Its function is as follows. Catalytic subunit of the tagatose-1,6-bisphosphate aldolase GatYZ, which catalyzes the reversible aldol condensation of dihydroxyacetone phosphate (DHAP or glycerone-phosphate) with glyceraldehyde 3-phosphate (G3P) to produce tagatose 1,6-bisphosphate (TBP). Requires GatZ subunit for full activity and stability. Is involved in the catabolism of galactitol. This chain is D-tagatose-1,6-bisphosphate aldolase subunit GatY, found in Escherichia coli O6:H1 (strain CFT073 / ATCC 700928 / UPEC).